We begin with the raw amino-acid sequence, 219 residues long: RING-H2 finger protein ATL78 (219 aa).

A helical transmembrane segment spans residues 57–77 (VMVLSVLLCALVCSLGLNSII). Residues 131 to 173 (CAICLSEFVAEERVKLLPTCHHGFHVRCIDKWLSSHSSCPTCR) form an RING-type; atypical zinc finger.

Belongs to the RING-type zinc finger family. ATL subfamily.

It is found in the membrane. The catalysed reaction is S-ubiquitinyl-[E2 ubiquitin-conjugating enzyme]-L-cysteine + [acceptor protein]-L-lysine = [E2 ubiquitin-conjugating enzyme]-L-cysteine + N(6)-ubiquitinyl-[acceptor protein]-L-lysine.. It participates in protein modification; protein ubiquitination. The protein is RING-H2 finger protein ATL78 (ATL78) of Arabidopsis thaliana (Mouse-ear cress).